Reading from the N-terminus, the 269-residue chain is Protein SET (269 aa).

Positions 1-33 (MSSVPKRAKLDGAPADGNTSAAAGNNEEESEAL) are disordered. S30, S148, and S152 each carry phosphoserine. A disordered region spans residues 227 to 269 (LVPDIEVEPEDEEDNEDNDEEAFDDEDGEDGEGEEEEEDEDDK). Residues 231–269 (IEVEPEDEEDNEDNDEEAFDDEDGEDGEGEEEEEDEDDK) are compositionally biased toward acidic residues.

The protein belongs to the nucleosome assembly protein (NAP) family. As to quaternary structure, interacts specifically with B-type cyclins.

The sequence is that of Protein SET (Set) from Drosophila melanogaster (Fruit fly).